Reading from the N-terminus, the 438-residue chain is Xylose isomerase (438 aa).

Active-site residues include His100 and Asp103. Residues Glu231, Glu267, His270, Asp295, Asp306, Asp308, and Asp338 each contribute to the Mg(2+) site.

Belongs to the xylose isomerase family. In terms of assembly, homotetramer. It depends on Mg(2+) as a cofactor.

Its subcellular location is the cytoplasm. The enzyme catalyses alpha-D-xylose = alpha-D-xylulofuranose. The protein is Xylose isomerase (xylA) of Thermoanaerobacter pseudethanolicus (strain ATCC 33223 / 39E) (Clostridium thermohydrosulfuricum).